We begin with the raw amino-acid sequence, 168 residues long: MTRKQRRLMLIGVCGAVLAVALGLVLWAMRGTIVFFRSPSEIASQAVAPGVRFRLGGLVQEGSVQRGPDGRVAFVVTDNGATVPVRYQGLLPDLFREGQGVVAEGMLEPGGMFRADTVLAKHDETYMPREVADALKKQGHWQGEAKHPGGTAPAPQTASGEKPALRQQ.

Residues 1-7 (MTRKQRR) are Cytoplasmic-facing. Residues 8-28 (LMLIGVCGAVLAVALGLVLWA) form a helical; Signal-anchor for type II membrane protein membrane-spanning segment. The Periplasmic portion of the chain corresponds to 29–168 (MRGTIVFFRS…SGEKPALRQQ (140 aa)). Heme contacts are provided by His122 and Tyr126. The tract at residues 134-168 (ALKKQGHWQGEAKHPGGTAPAPQTASGEKPALRQQ) is disordered.

The protein belongs to the CcmE/CycJ family.

The protein resides in the cell inner membrane. Functionally, heme chaperone required for the biogenesis of c-type cytochromes. Transiently binds heme delivered by CcmC and transfers the heme to apo-cytochromes in a process facilitated by CcmF and CcmH. This chain is Cytochrome c-type biogenesis protein CcmE, found in Methylobacterium nodulans (strain LMG 21967 / CNCM I-2342 / ORS 2060).